Reading from the N-terminus, the 1571-residue chain is Pentafunctional AROM polypeptide (1571 aa).

Residues 1-384 are 3-dehydroquinate synthase; sequence MEQPTTIQIL…HEQKASVVSN (384 aa). Residues 44 to 46, 81 to 84, 114 to 116, and Asp119 contribute to the NAD(+) site; these read DTN, ESSK, and GGV. Arg130 is a 7-phospho-2-dehydro-3-deoxy-D-arabino-heptonate binding site. 139-140 provides a ligand contact to NAD(+); the sequence is TT. 2 residues coordinate 7-phospho-2-dehydro-3-deoxy-D-arabino-heptonate: Asp146 and Lys152. Lys161 is an NAD(+) binding site. Asn162 contacts 7-phospho-2-dehydro-3-deoxy-D-arabino-heptonate. NAD(+) is bound by residues 179 to 182 and Asn190; that span reads FLNT. Glu194 lines the Zn(2+) pocket. Residues 194–197 and Lys250 each bind 7-phospho-2-dehydro-3-deoxy-D-arabino-heptonate; that span reads EVIK. The active-site Proton acceptor; for 3-dehydroquinate synthase activity is the Glu260. 7-phospho-2-dehydro-3-deoxy-D-arabino-heptonate-binding positions include 264–268 and His271; that span reads RNLLN. His271 provides a ligand contact to Zn(2+). Residue His275 is the Proton acceptor; for 3-dehydroquinate synthase activity of the active site. 2 residues coordinate 7-phospho-2-dehydro-3-deoxy-D-arabino-heptonate: His287 and Lys356. His287 provides a ligand contact to Zn(2+). The interval 397–843 is EPSP synthase; sequence VLPGIPKPLN…WDALAQTFKV (447 aa). Residue Cys825 is the For EPSP synthase activity of the active site. Residues 866–1057 are shikimate kinase; the sequence is ASIFIIGMRG…KKKDHSFFVS (192 aa). 872–879 is an ATP binding site; sequence GMRGAGKT. The 3-dehydroquinase stretch occupies residues 1058-1278; sequence LTLPDLQLSA…AAPGQVSAKD (221 aa). His1181 acts as the Proton acceptor; for 3-dehydroquinate dehydratase activity in catalysis. Lys1209 acts as the Schiff-base intermediate with substrate; for 3-dehydroquinate dehydratase activity in catalysis. Residues 1291–1571 form a shikimate dehydrogenase region; sequence AKKFALFGKP…EDARAAVMNI (281 aa).

This sequence in the N-terminal section; belongs to the sugar phosphate cyclases superfamily. Dehydroquinate synthase family. In the 2nd section; belongs to the EPSP synthase family. It in the 3rd section; belongs to the shikimate kinase family. The protein in the 4th section; belongs to the type-I 3-dehydroquinase family. This sequence in the C-terminal section; belongs to the shikimate dehydrogenase family. Homodimer. Zn(2+) is required as a cofactor.

It is found in the cytoplasm. The catalysed reaction is 7-phospho-2-dehydro-3-deoxy-D-arabino-heptonate = 3-dehydroquinate + phosphate. The enzyme catalyses 3-dehydroquinate = 3-dehydroshikimate + H2O. It catalyses the reaction shikimate + NADP(+) = 3-dehydroshikimate + NADPH + H(+). It carries out the reaction shikimate + ATP = 3-phosphoshikimate + ADP + H(+). The catalysed reaction is 3-phosphoshikimate + phosphoenolpyruvate = 5-O-(1-carboxyvinyl)-3-phosphoshikimate + phosphate. It functions in the pathway metabolic intermediate biosynthesis; chorismate biosynthesis; chorismate from D-erythrose 4-phosphate and phosphoenolpyruvate: step 2/7. Its pathway is metabolic intermediate biosynthesis; chorismate biosynthesis; chorismate from D-erythrose 4-phosphate and phosphoenolpyruvate: step 3/7. The protein operates within metabolic intermediate biosynthesis; chorismate biosynthesis; chorismate from D-erythrose 4-phosphate and phosphoenolpyruvate: step 4/7. It participates in metabolic intermediate biosynthesis; chorismate biosynthesis; chorismate from D-erythrose 4-phosphate and phosphoenolpyruvate: step 5/7. It functions in the pathway metabolic intermediate biosynthesis; chorismate biosynthesis; chorismate from D-erythrose 4-phosphate and phosphoenolpyruvate: step 6/7. Functionally, the AROM polypeptide catalyzes 5 consecutive enzymatic reactions in prechorismate polyaromatic amino acid biosynthesis. The protein is Pentafunctional AROM polypeptide of Arthroderma otae (strain ATCC MYA-4605 / CBS 113480) (Microsporum canis).